An 898-amino-acid chain; its full sequence is Chitin synthase 1 (898 aa).

A disordered region spans residues 1-154 (MDPRYGAQPM…PPQQGGGIQR (154 aa)). The segment covering 9-21 (PMPPRRSPSPGHP) has biased composition (pro residues). Polar residues-rich tracts occupy residues 64-75 (DHLSLNAAQSVD) and 136-146 (DVPSEQYQDPP). The next 5 membrane-spanning stretches (helical) occupy residues 441–461 (SAFG…YVAL), 540–560 (RWLN…LDFL), 570–590 (FAFF…WFAI), 616–636 (ILGV…FVLS), and 651–671 (MCWF…FISV). Asparagine 685 carries an N-linked (GlcNAc...) asparagine glycan. Transmembrane regions (helical) follow at residues 697–717 (MLII…LIML), 726–746 (FAQY…YAFC), 825–845 (GVVL…LSSA), and 870–890 (IVLW…MWFL).

Belongs to the chitin synthase family. Class I subfamily.

The protein localises to the cell membrane. The catalysed reaction is [(1-&gt;4)-N-acetyl-beta-D-glucosaminyl](n) + UDP-N-acetyl-alpha-D-glucosamine = [(1-&gt;4)-N-acetyl-beta-D-glucosaminyl](n+1) + UDP + H(+). Functionally, polymerizes chitin, a structural polymer of the cell wall and septum, by transferring the sugar moiety of UDP-GlcNAc to the non-reducing end of the growing chitin polymer. Shows additive effects in septum formation with CHS2, CHS3A, CHS4, CHS5, CHS6 and CHS7. Regulates mycelial growth and conidiation. Involved in virulence and mediates mycotoxin deoxinivalenol (DON) biosynthesis via the regulation of the expression of TRI4, TRI5 and TRI6. This is Chitin synthase 1 from Gibberella zeae (strain ATCC MYA-4620 / CBS 123657 / FGSC 9075 / NRRL 31084 / PH-1) (Wheat head blight fungus).